The sequence spans 338 residues: MSTLRLLISDSYDPWFNLAVEECIFRQMPATQRVLFLWRNADTVVIGRAQNPWKECNTRRMEEDNVRLARRSSGGGAVFHDLGNTCFTFMAGKPEYDKTISTSIVLNALNALGVSAEASGRNDLVVKTAEGDRKVSGSAYRETKDRGFHHGTLLLNADLSRLANYLNPDKKKLAAKGITSVRSRVTNLTELLPGITHEQVCEAITKAFFAHYGERVEAEIISPDKTPDLPNFAETFARQSSWEWNFGQAPAFSHLLDERFSWGGVELHFDVEKGHITRAQVFTDSLNPAPLEALAGRLQGCLYRADMLQQECEALLVDFPDQEKELRELSTWIAGAVR.

The BPL/LPL catalytic domain occupies 29 to 216 (PATQRVLFLW…AFFAHYGERV (188 aa)). Residues arginine 71, 76–79 (GAVF), and lysine 134 contribute to the ATP site. Lysine 134 contacts (R)-lipoate.

It belongs to the LplA family. As to quaternary structure, monomer.

The protein resides in the cytoplasm. The enzyme catalyses L-lysyl-[lipoyl-carrier protein] + (R)-lipoate + ATP = N(6)-[(R)-lipoyl]-L-lysyl-[lipoyl-carrier protein] + AMP + diphosphate + H(+). It functions in the pathway protein modification; protein lipoylation via exogenous pathway; protein N(6)-(lipoyl)lysine from lipoate: step 1/2. The protein operates within protein modification; protein lipoylation via exogenous pathway; protein N(6)-(lipoyl)lysine from lipoate: step 2/2. Functionally, catalyzes both the ATP-dependent activation of exogenously supplied lipoate to lipoyl-AMP and the transfer of the activated lipoyl onto the lipoyl domains of lipoate-dependent enzymes. The polypeptide is Lipoate-protein ligase A (Escherichia coli O9:H4 (strain HS)).